A 285-amino-acid chain; its full sequence is Shikimate dehydrogenase (NADP(+)) (285 aa).

Shikimate is bound by residues 19–21 (SLS) and T66. K70 serves as the catalytic Proton acceptor. 2 residues coordinate shikimate: N91 and D107. Residues 129–133 (GSGGA) and L228 each bind NADP(+). Position 230 (Y230) interacts with shikimate. G251 is a binding site for NADP(+).

This sequence belongs to the shikimate dehydrogenase family. As to quaternary structure, homodimer.

It catalyses the reaction shikimate + NADP(+) = 3-dehydroshikimate + NADPH + H(+). It participates in metabolic intermediate biosynthesis; chorismate biosynthesis; chorismate from D-erythrose 4-phosphate and phosphoenolpyruvate: step 4/7. Its function is as follows. Involved in the biosynthesis of the chorismate, which leads to the biosynthesis of aromatic amino acids. Catalyzes the reversible NADPH linked reduction of 3-dehydroshikimate (DHSA) to yield shikimate (SA). The protein is Shikimate dehydrogenase (NADP(+)) of Prochlorococcus marinus subsp. pastoris (strain CCMP1986 / NIES-2087 / MED4).